The primary structure comprises 266 residues: Small ribosomal subunit protein eS1 (266 aa).

The tract at residues 236 to 266 (GAGTAAKATGDDTGAKVERADGYEPPIQESV) is disordered. Over residues 244 to 257 (TGDDTGAKVERADG) the composition is skewed to basic and acidic residues.

The protein belongs to the eukaryotic ribosomal protein eS1 family. As to quaternary structure, component of the small ribosomal subunit. Mature ribosomes consist of a small (40S) and a large (60S) subunit. The 40S subunit contains about 33 different proteins and 1 molecule of RNA (18S). The 60S subunit contains about 49 different proteins and 3 molecules of RNA (28S, 5.8S and 5S). Part of the small subunit (SSU) processome, composed of more than 70 proteins and the RNA chaperone small nucleolar RNA (snoRNA) U3.

The protein resides in the cytoplasm. It localises to the nucleus. It is found in the nucleolus. Functionally, component of the small ribosomal subunit. The ribosome is a large ribonucleoprotein complex responsible for the synthesis of proteins in the cell. Part of the small subunit (SSU) processome, first precursor of the small eukaryotic ribosomal subunit. During the assembly of the SSU processome in the nucleolus, many ribosome biogenesis factors, an RNA chaperone and ribosomal proteins associate with the nascent pre-rRNA and work in concert to generate RNA folding, modifications, rearrangements and cleavage as well as targeted degradation of pre-ribosomal RNA by the RNA exosome. May play a role during erythropoiesis. The polypeptide is Small ribosomal subunit protein eS1 (rps3a) (Tetraodon nigroviridis (Spotted green pufferfish)).